The sequence spans 1310 residues: PAN2-PAN3 deadenylation complex catalytic subunit pan2 (1310 aa).

4 WD repeats span residues 22-61, 67-105, 106-144, and 145-184; these read YHAGPASTIAFDNQDELLWIGTQKGFAGSFIGRELKRFTA, ETDGPLRQFLFVDKGVIFLGSRSVYMAARSGVPIWSIRH, ESMQDLRAMSFTSKGTSEILVAGWQNKMLVIDVNKGEVV, and KELPTQDQYSFLKMSRYICAATNKGTVNILDPITFTIKKQ. Residues 318-463 form a linker region; sequence QFTEIGIPPR…NNDHWSLRPE (146 aa). In terms of domain architecture, USP spans 463-850; it reads EAPPEYRICE…MPVVVMFQVK (388 aa). The Zn(2+) site is built by His-525, Cys-530, Cys-535, Cys-538, Cys-645, Cys-648, Cys-700, and Cys-703. Residues 897-1070 enclose the Exonuclease domain; that stretch reads IAIDTEFIRL…EDAQTALKLY (174 aa). Residues Asp-900, Glu-902, Asp-1009, and Asp-1062 each coordinate a divalent metal cation. Residues 1121–1169 form a disordered region; it reads TPPVPAPGTTEGSFEISNSSTATTGGSALSATGGMGSASASSSMPSTPV. The segment covering 1139–1168 has biased composition (low complexity); the sequence is SSTATTGGSALSATGGMGSASASSSMPSTP.

It belongs to the peptidase C19 family. PAN2 subfamily. As to quaternary structure, forms a heterotrimer with an asymmetric homodimer of the regulatory subunit par-2/pan3 to form the poly(A)-nuclease (PAN) deadenylation complex. A divalent metal cation is required as a cofactor.

Its subcellular location is the cytoplasm. It catalyses the reaction Exonucleolytic cleavage of poly(A) to 5'-AMP.. Its activity is regulated as follows. Positively regulated by the regulatory subunit par-2/pan3. Its function is as follows. Catalytic subunit of the poly(A)-nuclease (PAN) deadenylation complex, one of two cytoplasmic mRNA deadenylases involved in mRNA turnover. PAN specifically shortens poly(A) tails of RNA and the activity is stimulated by poly(A)-binding protein pabp-1. PAN deadenylation is followed by rapid degradation of the shortened mRNA tails by the CCR4-NOT complex. Deadenylated mRNAs are then degraded by two alternative mechanisms, namely exosome-mediated 3'-5' exonucleolytic degradation, or deadenylation-dependent mRNA decaping and subsequent 5'-3' exonucleolytic degradation by rgb-30/xrn1. May also be involved in post-transcriptional maturation of mRNA poly(A) tails. The chain is PAN2-PAN3 deadenylation complex catalytic subunit pan2 (par-1) from Neurospora crassa (strain ATCC 24698 / 74-OR23-1A / CBS 708.71 / DSM 1257 / FGSC 987).